The chain runs to 403 residues: Methylthioribose-1-phosphate isomerase (403 aa).

The Proton donor role is filled by D280.

It belongs to the eIF-2B alpha/beta/delta subunits family. MtnA subfamily.

The protein localises to the cytoplasm. It localises to the nucleus. It catalyses the reaction 5-(methylsulfanyl)-alpha-D-ribose 1-phosphate = 5-(methylsulfanyl)-D-ribulose 1-phosphate. It functions in the pathway amino-acid biosynthesis; L-methionine biosynthesis via salvage pathway; L-methionine from S-methyl-5-thio-alpha-D-ribose 1-phosphate: step 1/6. Catalyzes the interconversion of methylthioribose-1-phosphate (MTR-1-P) into methylthioribulose-1-phosphate (MTRu-1-P). This chain is Methylthioribose-1-phosphate isomerase, found in Eremothecium gossypii (strain ATCC 10895 / CBS 109.51 / FGSC 9923 / NRRL Y-1056) (Yeast).